The sequence spans 59 residues: Large ribosomal subunit protein uL30 (59 aa).

It belongs to the universal ribosomal protein uL30 family. In terms of assembly, part of the 50S ribosomal subunit.

This Erwinia tasmaniensis (strain DSM 17950 / CFBP 7177 / CIP 109463 / NCPPB 4357 / Et1/99) protein is Large ribosomal subunit protein uL30.